The sequence spans 217 residues: Uracil-DNA glycosylase (217 aa).

Asp62 functions as the Proton acceptor in the catalytic mechanism.

This sequence belongs to the uracil-DNA glycosylase (UDG) superfamily. UNG family.

Its subcellular location is the cytoplasm. The enzyme catalyses Hydrolyzes single-stranded DNA or mismatched double-stranded DNA and polynucleotides, releasing free uracil.. In terms of biological role, excises uracil residues from the DNA which can arise as a result of misincorporation of dUMP residues by DNA polymerase or due to deamination of cytosine. The sequence is that of Uracil-DNA glycosylase from Streptococcus gordonii (strain Challis / ATCC 35105 / BCRC 15272 / CH1 / DL1 / V288).